A 561-amino-acid chain; its full sequence is DNA ligase B (561 aa).

K125 serves as the catalytic N6-AMP-lysine intermediate.

The protein belongs to the NAD-dependent DNA ligase family. LigB subfamily.

It carries out the reaction NAD(+) + (deoxyribonucleotide)n-3'-hydroxyl + 5'-phospho-(deoxyribonucleotide)m = (deoxyribonucleotide)n+m + AMP + beta-nicotinamide D-nucleotide.. Functionally, catalyzes the formation of phosphodiester linkages between 5'-phosphoryl and 3'-hydroxyl groups in double-stranded DNA using NAD as a coenzyme and as the energy source for the reaction. This Salmonella newport (strain SL254) protein is DNA ligase B.